Here is a 531-residue protein sequence, read N- to C-terminus: CTP synthase (531 aa).

The interval Met1–Leu267 is amidoligase domain. Ser13 is a binding site for CTP. Ser13 contacts UTP. Ser14–Ile19 is an ATP binding site. Tyr54 contributes to the L-glutamine binding site. Residue Asp71 coordinates ATP. Mg(2+) contacts are provided by Asp71 and Glu141. Residues Asp148–Glu150, Lys188–Gln193, and Lys224 each bind CTP. UTP is bound by residues Lys188–Gln193 and Lys224. ATP is bound at residue Arg240 to Ala242. The region spanning Lys292–Glu531 is the Glutamine amidotransferase type-1 domain. Gly354 serves as a coordination point for L-glutamine. Cys381 (nucleophile; for glutamine hydrolysis) is an active-site residue. Residues Leu382 to Gln385, Glu405, and Arg462 each bind L-glutamine. Catalysis depends on residues His507 and Glu509.

Belongs to the CTP synthase family. Homotetramer.

The enzyme catalyses UTP + L-glutamine + ATP + H2O = CTP + L-glutamate + ADP + phosphate + 2 H(+). It carries out the reaction L-glutamine + H2O = L-glutamate + NH4(+). It catalyses the reaction UTP + NH4(+) + ATP = CTP + ADP + phosphate + 2 H(+). The protein operates within pyrimidine metabolism; CTP biosynthesis via de novo pathway; CTP from UDP: step 2/2. Its activity is regulated as follows. Allosterically activated by GTP, when glutamine is the substrate; GTP has no effect on the reaction when ammonia is the substrate. The allosteric effector GTP functions by stabilizing the protein conformation that binds the tetrahedral intermediate(s) formed during glutamine hydrolysis. Inhibited by the product CTP, via allosteric rather than competitive inhibition. In terms of biological role, catalyzes the ATP-dependent amination of UTP to CTP with either L-glutamine or ammonia as the source of nitrogen. Regulates intracellular CTP levels through interactions with the four ribonucleotide triphosphates. This chain is CTP synthase, found in Geobacillus kaustophilus (strain HTA426).